A 3564-amino-acid polypeptide reads, in one-letter code: CUB and sushi domain-containing protein 1 (3564 aa).

A signal peptide spans 1 to 26 (MTAWRRFQSLLLLLGLLVLCARLLTA). Over 27 to 3487 (AKGQNCGGLV…SHYHGTSSGS (3461 aa)) the chain is Extracellular. Disulfide bonds link cysteine 32/cysteine 58, cysteine 145/cysteine 185, cysteine 171/cysteine 202, cysteine 208/cysteine 234, cysteine 349/cysteine 389, cysteine 375/cysteine 406, cysteine 411/cysteine 437, cysteine 527/cysteine 567, cysteine 553/cysteine 580, and cysteine 584/cysteine 610. In terms of domain architecture, CUB 1 spans 32 to 140 (CGGLVQGPNG…QGFKALYEVL (109 aa)). Asparagine 40 and asparagine 57 each carry an N-linked (GlcNAc...) asparagine glycan. The Sushi 1 domain maps to 143 to 204 (HTCGNPGEIL…WDFPAPFCRA (62 aa)). Residues 208 to 312 (CGGTLRGTSS…KGFNAQFQVK (105 aa)) enclose the CUB 2 domain. Residues 347-408 (DMCPDPGIPE…WSDHRPICRA (62 aa)) enclose the Sushi 2 domain. One can recognise a CUB 3 domain in the interval 411-522 (CGSNLRGPSG…PGFKAVYQEI (112 aa)). The Sushi 3 domain maps to 525–582 (GGCGDPGIPAYGKRTGSSFLHGDTLTFECPAAFELVGERVITCQQNNQWSGNKPSCVF). The region spanning 584-692 (CFFNFTASSG…RGFNITYTTF (109 aa)) is the CUB 4 domain. 2 N-linked (GlcNAc...) asparagine glycosylation sites follow: asparagine 587 and asparagine 686. The Sushi 4 domain occupies 695–756 (NECHDPGIPI…WSSTVPRCEA (62 aa)). Disulfide bonds link cysteine 697–cysteine 738, cysteine 723–cysteine 754, cysteine 758–cysteine 784, cysteine 873–cysteine 913, cysteine 899–cysteine 926, and cysteine 930–cysteine 956. Positions 758-866 (CGGHLTASSG…IGFLIHYESV (109 aa)) constitute a CUB 5 domain. Positions 871–928 (DSCLDPGIPVNGHRHGGDFGIRSTVTFSCDPGYTLSDDEPLVCERNHQWNHALPSCDA) constitute a Sushi 5 domain. Positions 930 to 1040 (CGGYIQGKSG…EGFNITFSEY (111 aa)) constitute a CUB 6 domain. N-linked (GlcNAc...) asparagine glycans are attached at residues asparagine 955, asparagine 1015, and asparagine 1034. Positions 1043 to 1102 (EPCDDPGVPAFSRRIGFHFGVGDSLTFSCFLGYRLEGATKLTCLGGGRRVWSAPLPRCVA) constitute a Sushi 6 domain. 3 disulfides stabilise this stretch: cysteine 1045-cysteine 1085, cysteine 1071-cysteine 1100, and cysteine 1104-cysteine 1130. Positions 1104–1212 (CGASVKGNEG…QGFQLTYTSF (109 aa)) constitute a CUB 7 domain. Asparagine 1184 and asparagine 1197 each carry an N-linked (GlcNAc...) asparagine glycan. The Sushi 7 domain maps to 1215–1275 (VKCEDPGIPN…WDKPLPSCIA (61 aa)). Disulfide bonds link cysteine 1217/cysteine 1258, cysteine 1244/cysteine 1273, cysteine 1277/cysteine 1304, cysteine 1391/cysteine 1431, cysteine 1417/cysteine 1447, cysteine 1451/cysteine 1477, cysteine 1564/cysteine 1604, cysteine 1590/cysteine 1621, cysteine 1625/cysteine 1651, cysteine 1741/cysteine 1781, cysteine 1767/cysteine 1798, and cysteine 1802/cysteine 1828. The CUB 8 domain occupies 1277–1386 (CGGQIHAATS…SGFSIQFSTS (110 aa)). The 61-residue stretch at 1389–1449 (ATCNDPGMPQ…WQPDPPTCIA (61 aa)) folds into the Sushi 8 domain. Asparagine 1399 carries N-linked (GlcNAc...) asparagine glycosylation. In terms of domain architecture, CUB 9 spans 1451–1559 (CGGNLTGPAG…SGFAIEFKEK (109 aa)). 2 N-linked (GlcNAc...) asparagine glycosylation sites follow: asparagine 1454 and asparagine 1572. A Sushi 9 domain is found at 1562-1623 (EACFDPGNIM…WDQVLPSCNA (62 aa)). Residues 1625–1733 (CGGQYTGSEG…RGFHFVYQAV (109 aa)) enclose the CUB 10 domain. An N-linked (GlcNAc...) asparagine glycan is attached at asparagine 1644. The Sushi 10 domain maps to 1739–1800 (TQCSSVPEPR…WNDTIPSCVV (62 aa)). N-linked (GlcNAc...) asparagine glycosylation is found at asparagine 1792, asparagine 1805, and asparagine 1882. The region spanning 1802-1910 (CSGNFTQRRG…AGFHLEYKTV (109 aa)) is the CUB 11 domain. The region spanning 1913 to 1972 (AACQEPALPSNSIKIGDRYMVNDVLSFQCEPGYTLQGRSHISCMPGTVRRWNYPSPLCIA) is the Sushi 11 domain. Disulfide bonds link cysteine 1915–cysteine 1955, cysteine 1941–cysteine 1970, and cysteine 1974–cysteine 2000. In terms of domain architecture, CUB 12 spans 1974-2082 (CGGTLSTLGG…QGFKLAYQAY (109 aa)). Residue asparagine 2018 is glycosylated (N-linked (GlcNAc...) asparagine). The Sushi 12 domain occupies 2085–2144 (QNCPDPPPFQNGYMINSDYSVGQSVSFECYPGYILIGHPVLTCQHGINRNWNYPFPRCDA). Intrachain disulfides connect cysteine 2087–cysteine 2127, cysteine 2113–cysteine 2142, and cysteine 2146–cysteine 2172. A CUB 13 domain is found at 2146–2257 (CGYNVTSQNG…LNFHAFQLKK (112 aa)). 3 N-linked (GlcNAc...) asparagine glycosylation sites follow: asparagine 2149, asparagine 2154, and asparagine 2187. In terms of domain architecture, Sushi 13 spans 2256-2317 (KKCQPPPAVP…FEGSLPTCEA (62 aa)). Cystine bridges form between cysteine 2258-cysteine 2300, cysteine 2286-cysteine 2315, and cysteine 2319-cysteine 2347. Positions 2319–2430 (CPANEVRTGS…KGFKIRYAAP (112 aa)) constitute a CUB 14 domain. N-linked (GlcNAc...) asparagine glycans are attached at residues asparagine 2358, asparagine 2394, asparagine 2400, asparagine 2445, asparagine 2470, and asparagine 2503. Sushi domains follow at residues 2430-2492 (PYCS…LCQA), 2493-2554 (VSCG…TCKP), 2555-2619 (VACP…SCRV), 2620-2677 (ISCG…RCLA), 2678-2735 (GHCG…VCVP), 2736-2793 (ITCG…TCRV), 2794-2856 (VNCS…KCLA), 2857-2914 (ISCG…HCTG), 2918-2975 (GFCG…VCEA), 2976-3034 (VSCG…DCTI), 3035-3094 (ISCG…VCKA), 3095-3152 (VLCP…QCLP), 3153-3210 (VFCG…TCID), 3214-3272 (NTCP…ECIP), and 3273-3332 (HACR…VCKS). Intrachain disulfides connect cysteine 2432–cysteine 2473, cysteine 2459–cysteine 2490, cysteine 2495–cysteine 2537, cysteine 2521–cysteine 2552, cysteine 2557–cysteine 2602, cysteine 2588–cysteine 2617, cysteine 2622–cysteine 2662, cysteine 2648–cysteine 2675, cysteine 2680–cysteine 2720, cysteine 2706–cysteine 2733, cysteine 2738–cysteine 2778, and cysteine 2764–cysteine 2791. N-linked (GlcNAc...) asparagine glycosylation occurs at asparagine 2605. N-linked (GlcNAc...) asparagine glycosylation is found at asparagine 2750 and asparagine 2761. N-linked (GlcNAc...) asparagine glycosylation is present at asparagine 2795. 18 cysteine pairs are disulfide-bonded: cysteine 2796–cysteine 2841, cysteine 2827–cysteine 2854, cysteine 2859–cysteine 2899, cysteine 2885–cysteine 2912, cysteine 2920–cysteine 2960, cysteine 2946–cysteine 2973, cysteine 2978–cysteine 3019, cysteine 3005–cysteine 3032, cysteine 3037–cysteine 3079, cysteine 3063–cysteine 3092, cysteine 3097–cysteine 3137, cysteine 3123–cysteine 3150, cysteine 3155–cysteine 3195, cysteine 3181–cysteine 3208, cysteine 3216–cysteine 3257, cysteine 3243–cysteine 3270, cysteine 3275–cysteine 3317, and cysteine 3302–cysteine 3330. N-linked (GlcNAc...) asparagine glycosylation occurs at asparagine 2894. An N-linked (GlcNAc...) asparagine glycan is attached at asparagine 2963. Asparagine 3022 and asparagine 3056 each carry an N-linked (GlcNAc...) asparagine glycan. N-linked (GlcNAc...) asparagine glycosylation is present at asparagine 3105. N-linked (GlcNAc...) asparagine glycans are attached at residues asparagine 3228 and asparagine 3260. N-linked (GlcNAc...) asparagine glycosylation is found at asparagine 3339, asparagine 3379, and asparagine 3386. The helical transmembrane segment at 3488 to 3508 (VAAAILVPFFALILSGFAFYL) threads the bilayer. The Cytoplasmic segment spans residues 3509-3564 (YKHRTRPKVQYNGYAGHENSNGQASFENPMYDTNLKPTEAKAVRFDTTLNTVCTVV).

It belongs to the CSMD family. As to expression, weakly expressed in most tissues, except in brain. Expressed at intermediate level in brain, including cerebellum, substantia nigra, hippocampus and fetal brain.

It localises to the membrane. Functionally, potential suppressor of squamous cell carcinomas. The protein is CUB and sushi domain-containing protein 1 (CSMD1) of Homo sapiens (Human).